The following is a 324-amino-acid chain: NADH-ubiquinone oxidoreductase chain 1 (324 aa).

The next 8 helical transmembrane spans lie at 9–29 (VLNPLAYIVPVLLAVAFLTLL), 75–95 (FLFLATPMLALTLALTLWAPM), 106–126 (LGVLFVLALSSLAVYSILGSG), 146–166 (ISYEVSLGLILLSVIIFTGGF), 177–197 (SIWLVVPAWPLAALWYISTLA), 237–257 (ILLMNTLSAILFLGATHIPAL), 259–279 (ELTAMNLMTKAALLSVVFLWV), and 299–319 (FLPMTLALVLWHLALPIALAG).

Belongs to the complex I subunit 1 family.

It is found in the mitochondrion inner membrane. It catalyses the reaction a ubiquinone + NADH + 5 H(+)(in) = a ubiquinol + NAD(+) + 4 H(+)(out). Functionally, core subunit of the mitochondrial membrane respiratory chain NADH dehydrogenase (Complex I) that is believed to belong to the minimal assembly required for catalysis. Complex I functions in the transfer of electrons from NADH to the respiratory chain. The immediate electron acceptor for the enzyme is believed to be ubiquinone. In Thymallus arcticus (Arctic grayling), this protein is NADH-ubiquinone oxidoreductase chain 1 (MT-ND1).